A 206-amino-acid chain; its full sequence is Large ribosomal subunit protein uL4 (206 aa).

The segment at glycine 47–serine 77 is disordered.

It belongs to the universal ribosomal protein uL4 family. Part of the 50S ribosomal subunit.

Its function is as follows. One of the primary rRNA binding proteins, this protein initially binds near the 5'-end of the 23S rRNA. It is important during the early stages of 50S assembly. It makes multiple contacts with different domains of the 23S rRNA in the assembled 50S subunit and ribosome. Functionally, forms part of the polypeptide exit tunnel. This is Large ribosomal subunit protein uL4 from Clostridium beijerinckii (strain ATCC 51743 / NCIMB 8052) (Clostridium acetobutylicum).